The primary structure comprises 140 residues: Large ribosomal subunit protein bL17 (140 aa).

Belongs to the bacterial ribosomal protein bL17 family. As to quaternary structure, part of the 50S ribosomal subunit. Contacts protein L32.

This chain is Large ribosomal subunit protein bL17, found in Methylobacterium nodulans (strain LMG 21967 / CNCM I-2342 / ORS 2060).